A 190-amino-acid chain; its full sequence is Threonylcarbamoyl-AMP synthase (190 aa).

The YrdC-like domain occupies 9–190; sequence FLQLALARQT…IDIVTGQQFR (182 aa).

The protein belongs to the SUA5 family. TsaC subfamily.

The protein localises to the cytoplasm. The enzyme catalyses L-threonine + hydrogencarbonate + ATP = L-threonylcarbamoyladenylate + diphosphate + H2O. Its function is as follows. Required for the formation of a threonylcarbamoyl group on adenosine at position 37 (t(6)A37) in tRNAs that read codons beginning with adenine. Catalyzes the conversion of L-threonine, HCO(3)(-)/CO(2) and ATP to give threonylcarbamoyl-AMP (TC-AMP) as the acyladenylate intermediate, with the release of diphosphate. This chain is Threonylcarbamoyl-AMP synthase, found in Marinobacter nauticus (strain ATCC 700491 / DSM 11845 / VT8) (Marinobacter aquaeolei).